Reading from the N-terminus, the 291-residue chain is 4-hydroxy-tetrahydrodipicolinate synthase (291 aa).

A pyruvate-binding site is contributed by threonine 44. Tyrosine 132 serves as the catalytic Proton donor/acceptor. Residue lysine 160 is the Schiff-base intermediate with substrate of the active site. Residue valine 202 participates in pyruvate binding.

It belongs to the DapA family. Homotetramer; dimer of dimers.

It localises to the cytoplasm. It catalyses the reaction L-aspartate 4-semialdehyde + pyruvate = (2S,4S)-4-hydroxy-2,3,4,5-tetrahydrodipicolinate + H2O + H(+). Its pathway is amino-acid biosynthesis; L-lysine biosynthesis via DAP pathway; (S)-tetrahydrodipicolinate from L-aspartate: step 3/4. Catalyzes the condensation of (S)-aspartate-beta-semialdehyde [(S)-ASA] and pyruvate to 4-hydroxy-tetrahydrodipicolinate (HTPA). This is 4-hydroxy-tetrahydrodipicolinate synthase from Clostridium perfringens (strain SM101 / Type A).